A 377-amino-acid chain; its full sequence is Succinyl-diaminopimelate desuccinylase (377 aa).

H67 is a Zn(2+) binding site. D69 is a catalytic residue. D100 contacts Zn(2+). E134 acts as the Proton acceptor in catalysis. Residues E135, E163, and H349 each contribute to the Zn(2+) site.

Belongs to the peptidase M20A family. DapE subfamily. In terms of assembly, homodimer. Requires Zn(2+) as cofactor. Co(2+) serves as cofactor.

The enzyme catalyses N-succinyl-(2S,6S)-2,6-diaminopimelate + H2O = (2S,6S)-2,6-diaminopimelate + succinate. It participates in amino-acid biosynthesis; L-lysine biosynthesis via DAP pathway; LL-2,6-diaminopimelate from (S)-tetrahydrodipicolinate (succinylase route): step 3/3. Its function is as follows. Catalyzes the hydrolysis of N-succinyl-L,L-diaminopimelic acid (SDAP), forming succinate and LL-2,6-diaminopimelate (DAP), an intermediate involved in the bacterial biosynthesis of lysine and meso-diaminopimelic acid, an essential component of bacterial cell walls. This chain is Succinyl-diaminopimelate desuccinylase, found in Actinobacillus pleuropneumoniae serotype 3 (strain JL03).